The chain runs to 59 residues: Cecropin-A1 (59 aa).

Positions Met1 to Ala23 are cleaved as a signal peptide.

The protein belongs to the cecropin family.

The protein resides in the secreted. Its function is as follows. Cecropins have lytic and antibacterial activity against several Gram-positive and Gram-negative bacteria. This is Cecropin-A1 (CECA1) from Aedes albopictus (Asian tiger mosquito).